The chain runs to 248 residues: PF03932 family protein CutC (248 aa).

The protein belongs to the CutC family. In terms of assembly, homodimer.

The protein localises to the cytoplasm. In Shigella dysenteriae serotype 1 (strain Sd197), this protein is PF03932 family protein CutC.